The sequence spans 230 residues: Lactate utilization protein C (230 aa).

The protein belongs to the LutC/YkgG family.

In terms of biological role, is involved in L-lactate degradation and allows cells to grow with lactate as the sole carbon source. This chain is Lactate utilization protein C, found in Exiguobacterium sp. (strain ATCC BAA-1283 / AT1b).